A 337-amino-acid chain; its full sequence is Eukaryotic translation initiation factor 3 subunit H (337 aa).

One can recognise an MPN domain in the interval 21-153 (VQCDGLAVMK…LKAYRLTPQA (133 aa)).

It belongs to the eIF-3 subunit H family. In terms of assembly, component of the eukaryotic translation initiation factor 3 (eIF-3) complex. The eIF-3 complex interacts with pix. Interacts with mxt.

It localises to the cytoplasm. Component of the eukaryotic translation initiation factor 3 (eIF-3) complex, which is involved in protein synthesis of a specialized repertoire of mRNAs and, together with other initiation factors, stimulates binding of mRNA and methionyl-tRNAi to the 40S ribosome. The eIF-3 complex specifically targets and initiates translation of a subset of mRNAs involved in cell proliferation. In Drosophila virilis (Fruit fly), this protein is Eukaryotic translation initiation factor 3 subunit H.